The sequence spans 700 residues: Beta-galactosidase BgaB (700 aa).

2 residues coordinate substrate: Arg122 and Asn160. Glu161 functions as the Proton donor in the catalytic mechanism. Glu320 acts as the Nucleophile in catalysis. Substrate contacts are provided by residues Trp328 and 368–371 (EAFH).

The protein belongs to the glycosyl hydrolase 42 family. Trimer. Tetramer. In terms of processing, the N-terminus is blocked.

It catalyses the reaction Hydrolysis of terminal non-reducing beta-D-galactose residues in beta-D-galactosides.. Its activity is regulated as follows. Inhibited by high substrate concentrations (100 mg/ml). No effect on activity with various EDTA concentrations (0-1 mM). 20-fold higher activity when cells grown on TOS than when cells grown on galactose, glucose and lactose. Its function is as follows. Involved in the hydrolysis of transgalactooligosaccharides (TOS). Highly active towards Gal(beta1-4)Gal and Gal(beta1-4)-Gal-containing oligosaccharides. Low activity towards Gal(beta1-3)Gal, lactose and Gal(beta1-3)GalOMe. No activity towards Gal(beta1-6)Gal, Gal(beta1-4)Man, Gal(alpha1-4)Gal, Gal(alpha1-3)Gal(beta1-4)Gal, lactulose, 3'fucosyllactose, lacto-N-fucopentaose I, lacto-N-fucopentaose II, cellobiose, maltose or sucrose. No transglycosylation activity is found at high substrate concentrations (100 mg/ml) and only low transglycosylation activity at lower substrate concentrations (10 mg/ml). This chain is Beta-galactosidase BgaB (bgaB), found in Bifidobacterium adolescentis (strain ATCC 15703 / DSM 20083 / NCTC 11814 / E194a).